We begin with the raw amino-acid sequence, 251 residues long: Ly6/PLAUR domain-containing protein 5 (251 aa).

An N-terminal signal peptide occupies residues 1–25; sequence MAMGVPRVILLCLFGAALCLTGSQA. Asparagine 120 and asparagine 174 each carry an N-linked (GlcNAc...) asparagine glycan. Residues 135–214 enclose the UPAR/Ly6 domain; that stretch reads CYACIGVHQD…GSCCEGYLCN (80 aa). Alanine 225 carries GPI-anchor amidated alanine lipidation. A propeptide spans 226 to 251 (removed in mature form); it reads SATTPPRALQVLALLLPVLLLVGLSA.

The protein localises to the cell membrane. The polypeptide is Ly6/PLAUR domain-containing protein 5 (LYPD5) (Homo sapiens (Human)).